The chain runs to 434 residues: Adenylosuccinate synthetase (434 aa).

Residues 25–31 (GDEGKGK) and 53–55 (GHT) contribute to the GTP site. Asp26 serves as the catalytic Proton acceptor. Mg(2+) contacts are provided by Asp26 and Gly53. IMP-binding positions include 26 to 29 (DEGK), 51 to 54 (NAGH), Thr142, Arg156, Asn233, Thr248, and Arg312. His54 serves as the catalytic Proton donor. 308–314 (VTTGRKR) lines the substrate pocket. GTP is bound by residues Arg314, 340-342 (KLD), and 422-424 (GVG).

This sequence belongs to the adenylosuccinate synthetase family. In terms of assembly, homodimer. Mg(2+) serves as cofactor.

Its subcellular location is the cytoplasm. It carries out the reaction IMP + L-aspartate + GTP = N(6)-(1,2-dicarboxyethyl)-AMP + GDP + phosphate + 2 H(+). It functions in the pathway purine metabolism; AMP biosynthesis via de novo pathway; AMP from IMP: step 1/2. In terms of biological role, plays an important role in the de novo pathway and in the salvage pathway of purine nucleotide biosynthesis. Catalyzes the first committed step in the biosynthesis of AMP from IMP. This is Adenylosuccinate synthetase from Schizosaccharomyces japonicus (strain yFS275 / FY16936) (Fission yeast).